The following is a 29-amino-acid chain: Cytochrome b6-f complex subunit 8 (29 aa).

A helical transmembrane segment spans residues 3 to 23 (IVSIAWAALMVVFTFSLSLVV).

Belongs to the PetN family. As to quaternary structure, the 4 large subunits of the cytochrome b6-f complex are cytochrome b6, subunit IV (17 kDa polypeptide, PetD), cytochrome f and the Rieske protein, while the 4 small subunits are PetG, PetL, PetM and PetN. The complex functions as a dimer.

The protein localises to the plastid. It is found in the chloroplast thylakoid membrane. Component of the cytochrome b6-f complex, which mediates electron transfer between photosystem II (PSII) and photosystem I (PSI), cyclic electron flow around PSI, and state transitions. The chain is Cytochrome b6-f complex subunit 8 from Angiopteris evecta (Mule's foot fern).